A 202-amino-acid polypeptide reads, in one-letter code: 3-isopropylmalate dehydratase small subunit 1 (202 aa).

It belongs to the LeuD family. LeuD type 1 subfamily. Heterodimer of LeuC and LeuD.

The catalysed reaction is (2R,3S)-3-isopropylmalate = (2S)-2-isopropylmalate. The protein operates within amino-acid biosynthesis; L-leucine biosynthesis; L-leucine from 3-methyl-2-oxobutanoate: step 2/4. Catalyzes the isomerization between 2-isopropylmalate and 3-isopropylmalate, via the formation of 2-isopropylmaleate. This is 3-isopropylmalate dehydratase small subunit 1 from Mannheimia succiniciproducens (strain KCTC 0769BP / MBEL55E).